Consider the following 298-residue polypeptide: Lipoyl synthase (298 aa).

[4Fe-4S] cluster is bound by residues cysteine 40, cysteine 45, cysteine 51, cysteine 67, cysteine 71, cysteine 74, and serine 280. A Radical SAM core domain is found at 53 to 269; the sequence is AVRKTATFMI…KEIALSKGFS (217 aa).

It belongs to the radical SAM superfamily. Lipoyl synthase family. It depends on [4Fe-4S] cluster as a cofactor.

The protein resides in the cytoplasm. The catalysed reaction is [[Fe-S] cluster scaffold protein carrying a second [4Fe-4S](2+) cluster] + N(6)-octanoyl-L-lysyl-[protein] + 2 oxidized [2Fe-2S]-[ferredoxin] + 2 S-adenosyl-L-methionine + 4 H(+) = [[Fe-S] cluster scaffold protein] + N(6)-[(R)-dihydrolipoyl]-L-lysyl-[protein] + 4 Fe(3+) + 2 hydrogen sulfide + 2 5'-deoxyadenosine + 2 L-methionine + 2 reduced [2Fe-2S]-[ferredoxin]. It participates in protein modification; protein lipoylation via endogenous pathway; protein N(6)-(lipoyl)lysine from octanoyl-[acyl-carrier-protein]. Its function is as follows. Catalyzes the radical-mediated insertion of two sulfur atoms into the C-6 and C-8 positions of the octanoyl moiety bound to the lipoyl domains of lipoate-dependent enzymes, thereby converting the octanoylated domains into lipoylated derivatives. The sequence is that of Lipoyl synthase from Bacillus anthracis (strain A0248).